We begin with the raw amino-acid sequence, 383 residues long: MTSSPTVNLLDLDAQGLVAYCDSLGEKPFRARQLQRWIHQYNAADFDGMTDLAKSLREKLKGRATISMPGIVSDHISTDGTRKWLIDVGNSNAVETVYIPEETRGTLCVSSQAGCAVNCRFCSTGKQGFSRNLTTGEIIGQLRMAEFALRASRGVDGGRATGGDGKGERVVTNVVMMGMGEPLLNYDAVVPAMRLMLDDNAYGLSRRRVTLSTSGVVPMMDRLGADLPVALAVSLHAPSDPLRDMLVPLNKKYPLRELMAACQRYLKVAPRDFITFEYCMLDGVNDSEAQARELLAVTRDVPCKFNLIPFNPFPESGLIRSKPEQIKRFAQVLMDAGVITTVRKTRGDDIDAACGQLAGAVKDRTRLAERTGKAAKIIEVRAV.

The active-site Proton acceptor is Glu95. Residues 101 to 349 form the Radical SAM core domain; sequence EETRGTLCVS…TTVRKTRGDD (249 aa). A disulfide bond links Cys108 and Cys354. 3 residues coordinate [4Fe-4S] cluster: Cys115, Cys119, and Cys122. Residues 180–181, Ser212, 234–236, and Asn311 contribute to the S-adenosyl-L-methionine site; these read GE and SLH. Cys354 functions as the S-methylcysteine intermediate in the catalytic mechanism.

It belongs to the radical SAM superfamily. RlmN family. Requires [4Fe-4S] cluster as cofactor.

It is found in the cytoplasm. It carries out the reaction adenosine(2503) in 23S rRNA + 2 reduced [2Fe-2S]-[ferredoxin] + 2 S-adenosyl-L-methionine = 2-methyladenosine(2503) in 23S rRNA + 5'-deoxyadenosine + L-methionine + 2 oxidized [2Fe-2S]-[ferredoxin] + S-adenosyl-L-homocysteine. The catalysed reaction is adenosine(37) in tRNA + 2 reduced [2Fe-2S]-[ferredoxin] + 2 S-adenosyl-L-methionine = 2-methyladenosine(37) in tRNA + 5'-deoxyadenosine + L-methionine + 2 oxidized [2Fe-2S]-[ferredoxin] + S-adenosyl-L-homocysteine. Its function is as follows. Specifically methylates position 2 of adenine 2503 in 23S rRNA and position 2 of adenine 37 in tRNAs. m2A2503 modification seems to play a crucial role in the proofreading step occurring at the peptidyl transferase center and thus would serve to optimize ribosomal fidelity. The polypeptide is Dual-specificity RNA methyltransferase RlmN (Paraburkholderia xenovorans (strain LB400)).